We begin with the raw amino-acid sequence, 143 residues long: Nucleoside diphosphate kinase (143 aa).

6 residues coordinate ATP: lysine 11, phenylalanine 59, arginine 87, threonine 93, arginine 104, and asparagine 114. Histidine 117 acts as the Pros-phosphohistidine intermediate in catalysis.

It belongs to the NDK family. In terms of assembly, homotetramer. Mg(2+) is required as a cofactor.

The protein localises to the cytoplasm. It catalyses the reaction a 2'-deoxyribonucleoside 5'-diphosphate + ATP = a 2'-deoxyribonucleoside 5'-triphosphate + ADP. The catalysed reaction is a ribonucleoside 5'-diphosphate + ATP = a ribonucleoside 5'-triphosphate + ADP. Major role in the synthesis of nucleoside triphosphates other than ATP. The ATP gamma phosphate is transferred to the NDP beta phosphate via a ping-pong mechanism, using a phosphorylated active-site intermediate. The chain is Nucleoside diphosphate kinase from Nitrosococcus oceani (strain ATCC 19707 / BCRC 17464 / JCM 30415 / NCIMB 11848 / C-107).